Consider the following 176-residue polypeptide: Small ribosomal subunit protein uS5 (176 aa).

The region spanning 11 to 74 (LSEVLVDVNR…QAAKKRMMKV (64 aa)) is the S5 DRBM domain.

This sequence belongs to the universal ribosomal protein uS5 family. In terms of assembly, part of the 30S ribosomal subunit. Contacts proteins S4 and S8.

Its function is as follows. With S4 and S12 plays an important role in translational accuracy. In terms of biological role, located at the back of the 30S subunit body where it stabilizes the conformation of the head with respect to the body. This chain is Small ribosomal subunit protein uS5, found in Rickettsia conorii (strain ATCC VR-613 / Malish 7).